Reading from the N-terminus, the 418-residue chain is IQ domain-containing protein C (418 aa).

The region spanning 6–35 (FLRKVSTLQAGFRGFLVRRQFQSLRAEYEA) is the IQ domain. 5 disordered regions span residues 101-142 (QKKT…SVSK), 230-264 (HHAE…KGRE), 280-299 (SQAG…QPFK), 327-355 (AETQ…AGPC), and 376-418 (GSLD…LQWR). Polar residues-rich tracts occupy residues 129–142 (KASQ…SVSK) and 249–259 (SVTSAGKTTAG). The stretch at 141–176 (SKMENADLGLSQSQQELQEQRNHLAMELLWLQQAIN) forms a coiled coil. Residues 390–404 (PPSAGSSGHGNTSEL) are compositionally biased toward polar residues.

This Mus musculus (Mouse) protein is IQ domain-containing protein C (Iqcc).